The chain runs to 306 residues: 2-phospho-L-lactate transferase (306 aa).

7,8-didemethyl-8-hydroxy-5-deazariboflavin contacts are provided by D54 and R93.

Belongs to the CofD family. Homodimer. Mg(2+) serves as cofactor.

It catalyses the reaction (2S)-lactyl-2-diphospho-5'-guanosine + 7,8-didemethyl-8-hydroxy-5-deazariboflavin = oxidized coenzyme F420-0 + GMP + H(+). Its pathway is cofactor biosynthesis; coenzyme F420 biosynthesis. Catalyzes the transfer of the 2-phospholactate moiety from (2S)-lactyl-2-diphospho-5'-guanosine to 7,8-didemethyl-8-hydroxy-5-deazariboflavin (FO) with the formation of oxidized coenzyme F420-0 and GMP. This Methanothermobacter thermautotrophicus (strain ATCC 29096 / DSM 1053 / JCM 10044 / NBRC 100330 / Delta H) (Methanobacterium thermoautotrophicum) protein is 2-phospho-L-lactate transferase.